Reading from the N-terminus, the 390-residue chain is Galactokinase (390 aa).

34-37 (EHTD) lines the substrate pocket. Residues Ser-68 and 122-128 (GSGLSSS) each bind ATP. Ser-128 and Glu-160 together coordinate Mg(2+). The active-site Proton acceptor is the Asp-172. Position 221 (Tyr-221) interacts with substrate.

The protein belongs to the GHMP kinase family. GalK subfamily.

It is found in the cytoplasm. The catalysed reaction is alpha-D-galactose + ATP = alpha-D-galactose 1-phosphate + ADP + H(+). The protein operates within carbohydrate metabolism; galactose metabolism. In terms of biological role, catalyzes the transfer of the gamma-phosphate of ATP to D-galactose to form alpha-D-galactose-1-phosphate (Gal-1-P). The chain is Galactokinase from Chloroflexus aurantiacus (strain ATCC 29366 / DSM 635 / J-10-fl).